The sequence spans 404 residues: RNA exonuclease 3 (404 aa).

An Exonuclease domain is found at 243–389 (VLSLDCEMAF…QDAIATMDVV (147 aa)).

Belongs to the REXO1/REXO3 family.

The protein resides in the cytoplasm. Its subcellular location is the nucleus. In terms of biological role, 3' to 5' exoribonuclease required for proper 3' end maturation of MRP RNA and of the U5L snRNA. In Saccharomyces cerevisiae (strain ATCC 204508 / S288c) (Baker's yeast), this protein is RNA exonuclease 3 (REX3).